The chain runs to 558 residues: Coiled-coil domain-containing protein 63 (558 aa).

The tract at residues 1–26 (MPTKKHRRKDPESPQEPSEKTKEQLV) is disordered. The span at 9-26 (KDPESPQEPSEKTKEQLV) shows a compositional bias: basic and acidic residues. Coiled-coil stretches lie at residues 48–289 (NFRS…KAKK) and 339–416 (VTEL…VENL). A disordered region spans residues 531-558 (HYATRESRNRDSMPEKGDELKSKKKVTV). Positions 533-551 (ATRESRNRDSMPEKGDELK) are enriched in basic and acidic residues.

In terms of biological role, plays a role in spermiogenesis. Involved in the elongation of flagella and the formation of sperm heads. The chain is Coiled-coil domain-containing protein 63 from Bos taurus (Bovine).